The primary structure comprises 65 residues: Large ribosomal subunit protein bL33m (65 aa).

Residues 1–8 (MLLSAVSF) constitute a mitochondrion transit peptide.

It belongs to the bacterial ribosomal protein bL33 family. As to quaternary structure, component of the mitochondrial ribosome large subunit (39S) which comprises a 16S rRNA and about 50 distinct proteins.

Its subcellular location is the mitochondrion. This chain is Large ribosomal subunit protein bL33m (Mrpl33), found in Mus musculus (Mouse).